The primary structure comprises 300 residues: Ribonuclease HIII (300 aa).

The RNase H type-2 domain maps to 83–300 (IPIIGSDEVG…THKAQALLTK (218 aa)). A divalent metal cation is bound by residues Asp-89, Glu-90, and Asp-194.

Belongs to the RNase HII family. RnhC subfamily. Mn(2+) serves as cofactor. Mg(2+) is required as a cofactor.

The protein localises to the cytoplasm. It catalyses the reaction Endonucleolytic cleavage to 5'-phosphomonoester.. In terms of biological role, endonuclease that specifically degrades the RNA of RNA-DNA hybrids. The protein is Ribonuclease HIII of Streptococcus pyogenes serotype M3 (strain ATCC BAA-595 / MGAS315).